A 179-amino-acid polypeptide reads, in one-letter code: Signal peptidase complex subunit 3 (179 aa).

Residues 1–12 (MHTVLTRGNATV) lie on the Cytoplasmic side of the membrane. The helical; Signal-anchor for type II membrane protein transmembrane segment at 13 to 33 (AYTLSVLACLTFSCFLSTVFL) threads the bilayer. Residues 34–179 (DYRTDANINT…FPADYATSSI (146 aa)) are Lumenal-facing. 2 N-linked (GlcNAc...) asparagine glycosylation sites follow: asparagine 73 and asparagine 141.

This sequence belongs to the SPCS3 family. Component of the signal peptidase complex (SPC) composed of a catalytic subunit twr/SEC11 and three accessory subunits Spase12/SPCS1, Spase25/SPCS2 and Spase22-23/SPCS3. The complex induces a local thinning of the ER membrane which is used to measure the length of the signal peptide (SP) h-region of protein substrates. This ensures the selectivity of the complex towards h-regions shorter than 18-20 amino acids.

The protein resides in the endoplasmic reticulum membrane. Functionally, essential component of the signal peptidase complex (SPC) which catalyzes the cleavage of N-terminal signal sequences from nascent proteins as they are translocated into the lumen of the endoplasmic reticulum. Essential for the SPC catalytic activity, possibly by stabilizing and positioning the active center of the complex close to the lumenal surface. Its function is as follows. (Microbial infection) Plays an important role in infection by flaviviruses such as West Nile virus and Dengue virus type 2. This is Signal peptidase complex subunit 3 (Spase22-23) from Drosophila melanogaster (Fruit fly).